The sequence spans 466 residues: MNYSRRSLFKKTLIATALSALPATLLAATKQPLVIPPLIESRRGKPVFLGLESAQVKLIDDKLVEVWGFNGQYLGPTVRVRQGDFVKLNYRNNLPHSVAMNIQGLQTNSNILGGIGHSLKPQQGWSPIVPITQPAATCYYHSCSLASSAYQNYRGLAGMWIIEDDESRQAQLPNKYGVNDIPLILQDLHLNKEGSQLFRQNEPHFYGDRLFVNGQEAPFINVGRGWIRLRILNASVSRSYPLQFDDERAFLLIAKDQGFLPEAKTVKSVLVGMGERVEILVDLNEGGNVSLIVGKKRSFLDKIDLFFNDNGELTDNTVLELRPEGLLSVFNGKPSYRFSAVATLPSQILQERAFHFDAENAMINNKRFDPRRIDVNAKQGSAERWTLSATNAMGFRIQGAKFVVESRDDVATPGNELVWQDTLWFERTAKILVKFEHSASNSQPFTFGSSDLMQADKGALGLIVVQ.

Positions 1 to 28 (MNYSRRSLFKKTLIATALSALPATLLAA) form a signal peptide, tat-type signal.

Belongs to the FtsP family. Predicted to be exported by the Tat system. The position of the signal peptide cleavage has not been experimentally proven.

The protein resides in the periplasm. Cell division protein that is required for growth during stress conditions. May be involved in protecting or stabilizing the divisomal assembly under conditions of stress. This Actinobacillus succinogenes (strain ATCC 55618 / DSM 22257 / CCUG 43843 / 130Z) protein is Cell division protein FtsP.